The following is a 529-amino-acid chain: PTS system alpha-glucoside-specific EIICB component (529 aa).

The 416-residue stretch at 1–416 (MMKKVQRFGG…MDLKTPGRED (416 aa)) folds into the PTS EIIC type-1 domain. 12 helical membrane-spanning segments follow: residues 8–28 (FGGAMMAPVLLFAFTGIVVGL), 59–79 (GWTVFRQMPILFAIGLPISLA), 91–111 (FALYTTFNYFVAAILKVFYGI), 130–150 (VPTLDTNLFGGILIAALVVYL), 170–190 (VFVYIVGFVVMIPCAFLTVLI), 198–218 (ISALQGFMKASGIFGVWIYTF), 222–242 (ILIPTGLHHFVYTPFVFGPAA), 272–292 (GGFALHGNSKIFGAPGIALAM), 304–324 (VAALLIPIIFTAVISGITEPL), 328–348 (FLFIAPVLFAVHACLAATMAA), 352–372 (AFGVVGNMGGGLLDFFFLNWI), and 380–400 (GTVIAQIVIGLIFTAIYFVVF). Residues 450–529 (AQKGAIILEA…ERIEEMMKKG (80 aa)) enclose the PTS EIIB type-1 domain. Residue Cys472 is the Phosphocysteine intermediate; for EIIB activity of the active site.

It localises to the cell membrane. In terms of biological role, the phosphoenolpyruvate-dependent sugar phosphotransferase system (sugar PTS), a major carbohydrate active -transport system, catalyzes the phosphorylation of incoming sugar substrates concomitantly with their translocation across the cell membrane. This system is probably involved in transport of the alpha-glucosides trehalulose, turanose, maltulose and palatinose. The polypeptide is PTS system alpha-glucoside-specific EIICB component (Leptotrichia buccalis (strain ATCC 14201 / DSM 1135 / JCM 12969 / NCTC 10249 / C-1013-b)).